The following is a 383-amino-acid chain: N-acetyldiaminopimelate deacetylase (383 aa).

Residue D75 is part of the active site. E134 functions as the Proton acceptor in the catalytic mechanism.

The protein belongs to the peptidase M20A family. N-acetyldiaminopimelate deacetylase subfamily.

It carries out the reaction N-acetyl-(2S,6S)-2,6-diaminopimelate + H2O = (2S,6S)-2,6-diaminopimelate + acetate. Its pathway is amino-acid biosynthesis; L-lysine biosynthesis via DAP pathway; LL-2,6-diaminopimelate from (S)-tetrahydrodipicolinate (acetylase route): step 3/3. Functionally, catalyzes the conversion of N-acetyl-diaminopimelate to diaminopimelate and acetate. This is N-acetyldiaminopimelate deacetylase from Lactobacillus acidophilus (strain ATCC 700396 / NCK56 / N2 / NCFM).